Consider the following 432-residue polypeptide: MTRTSEFKIAIIGAGPAGLTLASLLTASPHPFNFTVFELRQRPHPSEVNLPCGNLDLQEGLGLQAIQACGLYPQFLEIESDCTQQSKVLDKNGKVLFDHVTQGQPEISRNALTQLLLSSVPVDRIRWNTKVLAVTAADHSSGQGTVVSQETTASTSTSETFDLIVGADGAWSRVRAVIPSAPQPVYSGVCYITLYLPRLTEEYHELDQLIGGGTLAICGDGKLLLAQRTVRGTARVCLFLHSKCQPAVQRALQSSGHDDRVGPNSILDANSLLSTLPTRPEDLRELLLTNDDYFASWSDDIKHLLMVTLKEQPADAEIVAHPMHMLPLAPYPHTHMRGIVMVGDAAHLMTPFAGKGVNVAMADSLSLAEQLEYLAVGRSSTMSFQDALDEALVGYEEVAHPRAKKAMKLTWHNLLLSYSDNGAEQIGNVLES.

The chain crosses the membrane as a helical span at residues 7 to 29 (FKIAIIGAGPAGLTLASLLTASP). N-linked (GlcNAc...) asparagine glycosylation is present at Asn-33.

The protein belongs to the aromatic-ring hydroxylase family. FAD is required as a cofactor.

The protein localises to the membrane. It functions in the pathway secondary metabolite biosynthesis. Its pathway is alkaloid biosynthesis. The protein operates within mycotoxin biosynthesis. In terms of biological role, monooxygenase; part of the gene cluster that mediates the biosynthesis of penigequinolones, potent insecticidal alkaloids that contain a highly modified 10-carbon prenyl group. The first stage is catalyzed by the nonribosomal peptide synthetase penN that condenses anthranilic acid and O-methyl-L-tyrosine to produce 4'-methoxycyclopeptin. 4'-methoxycyclopeptin is then converted to 4'-methoxydehydrocyclopeptin by the ketoglutarate-dependent dioxygenase penM through dehydrogenation to form a double bond between C-alpha and C-beta of the O-methyltyrosine side chain. PenM also converts its first product methoxydehydrocyclopeptin to 4'-methoxycyclopenin. The following conversion of 4'methoxycyclopenin into 4'-methoxyviridicatin is catalyzed by the cyclopenase penL. 4'-methoxyviridicatin is the precursor of quinolone natural products, and is further converted to quinolinone B. The prenyltransferase penI then catalyzes the canonical Friedel-Crafts alkylation of quinolinone B with dimethylallyl cation to yield dimethylallyl quinolone, which is subjected to FAD-dependent dehydrogenation by the FAD-linked oxidoreductase penH to yield conjugated aryl diene. The delta(3') double bond then serves as the site of the second alkylation with DMAPP catalyzed by the prenyltransferase penG to yield a carbenium ion intermediate, which can be attacked by H(2)O to yield a styrenyl quinolone containing a C3'-hydroxyprenyl chain, or undergo cyclization to yield yaequinolones J1 and J2. The conversion of the styrenyl quinolone into the tetrahydrofuran-containing yaequinolone C is performed by the FAD-dependent monooxygenase penE and involves epoxidation of the terminal C7'-C8' olefin, followed by epoxide ring opening initiated by the C3' hydroxyl group. The predicted cysteine hydrolase penJ acts as an epoxide hydrolase that enhances the rate of the 5-exo-tet cyclization step, increasing the yield of yaequinolone C. PenF catalyzes the cationic rearrangement of the epoxide formed by penE (before ring opening to produce yaequinolone C) into yaequinolone D. Finally, the short-chain dehydrogenase/reductase (SDR)-like reductase penD, catalyzes both the dehydration of yaequinolone D and the reduction of the resulting oxonium to yield penigequinolone. The protein is Monooxygenase penA of Penicillium thymicola.